We begin with the raw amino-acid sequence, 359 residues long: MSLQRLLQHSSNGNLADFCAGPAYSSYSTLTGSLTMDDNRRIQMLADTVATLPRGRKQLALTRSSSLSDFSWSQRKLVTVEKQDNETFGFEIQSYRPQNQNACSSEMFTLICKIQEDSPAHCAGLQAGDVLANINGVSTEGFTYKQVVDLIRSSGNLLTIETLNGTMILKRTELEAKLQVLKQTLKQKWVEYRSLQLQEHRLLHGDAANCPSLENMDLDELSLFGPLPGPGPALVDRNRLSSESSCKSWLSSMTMDSEDGYQTCVSEDSSRGAFSRQTSTDDECFIPKEGDDFLRRSSSRRNRSISNTSSGSMSPLWEGNLSSMFGTLPRKSRKGSVRKQLLKFIPGLHRAVEEEESRF.

In terms of domain architecture, PDZ spans 77–166 (LVTVEKQDNE…LLTIETLNGT (90 aa)). Residues 166–188 (TMILKRTELEAKLQVLKQTLKQK) form an interaction with CYTH1 region. The stretch at 166–188 (TMILKRTELEAKLQVLKQTLKQK) forms a coiled coil.

In terms of assembly, interacts with CYTH1 and SNX27. Expressed in lymph nodes, thymus, spleen, lung, peripheral blood leukocytes and bone marrow.

The protein resides in the cytoplasm. The protein localises to the early endosome. In terms of biological role, by its binding to cytohesin-1 (CYTH1), it modifies activation of ARFs by CYTH1 and its precise function may be to sequester CYTH1 in the cytoplasm. The chain is Cytohesin-interacting protein (CYTIP) from Homo sapiens (Human).